The following is a 529-amino-acid chain: Bifunctional purine biosynthesis protein PurH (529 aa).

The MGS-like domain occupies 1–148 (MQQRRPVRRA…KNHKDVAIVV (148 aa)). Lys287 is subject to N6-acetyllysine.

It belongs to the PurH family.

The catalysed reaction is (6R)-10-formyltetrahydrofolate + 5-amino-1-(5-phospho-beta-D-ribosyl)imidazole-4-carboxamide = 5-formamido-1-(5-phospho-D-ribosyl)imidazole-4-carboxamide + (6S)-5,6,7,8-tetrahydrofolate. It catalyses the reaction IMP + H2O = 5-formamido-1-(5-phospho-D-ribosyl)imidazole-4-carboxamide. It participates in purine metabolism; IMP biosynthesis via de novo pathway; 5-formamido-1-(5-phospho-D-ribosyl)imidazole-4-carboxamide from 5-amino-1-(5-phospho-D-ribosyl)imidazole-4-carboxamide (10-formyl THF route): step 1/1. It functions in the pathway purine metabolism; IMP biosynthesis via de novo pathway; IMP from 5-formamido-1-(5-phospho-D-ribosyl)imidazole-4-carboxamide: step 1/1. This Escherichia coli (strain 55989 / EAEC) protein is Bifunctional purine biosynthesis protein PurH.